Reading from the N-terminus, the 104-residue chain is Protamine-2 (104 aa).

Residues Ser-8 and Ser-10 each carry the phosphoserine modification. The segment at 23–104 (WQEQGRNGQE…SRRRRRCRRY (82 aa)) is disordered. Over residues 24–35 (QEQGRNGQEEQG) the composition is skewed to low complexity. Ser-37 is modified (phosphoserine). The span at 54 to 104 (YRRRRCSRRRRYRIHRRRSRSCRRRRRRSCRYRRRPRRGCRSRRRRRCRRY) shows a compositional bias: basic residues.

It belongs to the protamine P2 family. As to quaternary structure, interacts with TDRP. In terms of processing, proteolytic processing into mature chains is required for histone eviction during spermatogenesis. Transition proteins (TNP1 and TNP2) are required for processing. In terms of tissue distribution, testis.

The protein localises to the nucleus. It localises to the chromosome. Its function is as follows. Protamines substitute for histones in the chromatin of sperm during the haploid phase of spermatogenesis. They compact sperm DNA into a highly condensed, stable and inactive complex. This is Protamine-2 (PRM2) from Callithrix jacchus (White-tufted-ear marmoset).